Reading from the N-terminus, the 213-residue chain is Thiamine-phosphate synthase (213 aa).

4-amino-2-methyl-5-(diphosphooxymethyl)pyrimidine contacts are provided by residues 38-42 and Asn-70; that span reads QLRIK. Residues Asp-71 and Asp-90 each coordinate Mg(2+). Ser-109 contributes to the 4-amino-2-methyl-5-(diphosphooxymethyl)pyrimidine binding site. Residue 135–137 participates in 2-[(2R,5Z)-2-carboxy-4-methylthiazol-5(2H)-ylidene]ethyl phosphate binding; it reads TQT. Residue Lys-138 participates in 4-amino-2-methyl-5-(diphosphooxymethyl)pyrimidine binding. Residues Gly-168 and 188–189 contribute to the 2-[(2R,5Z)-2-carboxy-4-methylthiazol-5(2H)-ylidene]ethyl phosphate site; that span reads VS.

This sequence belongs to the thiamine-phosphate synthase family. Mg(2+) is required as a cofactor.

The catalysed reaction is 2-[(2R,5Z)-2-carboxy-4-methylthiazol-5(2H)-ylidene]ethyl phosphate + 4-amino-2-methyl-5-(diphosphooxymethyl)pyrimidine + 2 H(+) = thiamine phosphate + CO2 + diphosphate. It carries out the reaction 2-(2-carboxy-4-methylthiazol-5-yl)ethyl phosphate + 4-amino-2-methyl-5-(diphosphooxymethyl)pyrimidine + 2 H(+) = thiamine phosphate + CO2 + diphosphate. It catalyses the reaction 4-methyl-5-(2-phosphooxyethyl)-thiazole + 4-amino-2-methyl-5-(diphosphooxymethyl)pyrimidine + H(+) = thiamine phosphate + diphosphate. Its pathway is cofactor biosynthesis; thiamine diphosphate biosynthesis; thiamine phosphate from 4-amino-2-methyl-5-diphosphomethylpyrimidine and 4-methyl-5-(2-phosphoethyl)-thiazole: step 1/1. In terms of biological role, condenses 4-methyl-5-(beta-hydroxyethyl)thiazole monophosphate (THZ-P) and 2-methyl-4-amino-5-hydroxymethyl pyrimidine pyrophosphate (HMP-PP) to form thiamine monophosphate (TMP). In Pectobacterium atrosepticum (strain SCRI 1043 / ATCC BAA-672) (Erwinia carotovora subsp. atroseptica), this protein is Thiamine-phosphate synthase.